The chain runs to 234 residues: MPNPYFSFKQFTVYHDRCAMKVGTDGVLLGAWADVVSARNILDIGTGTGLISLMMAQRCNARIRAVDIDADAVEQARGNVAASPWQDRIEVELQDICHFTSETLFDVIVSNPPYFTDSLKCPGKQRNIARHTDFLDFDKLAGSAARLLHPEGVFSVIIPADGKESFLMAATRYGLHLSHQTFIHTKPGSEPKRVLLAFKFSVDKCVIDDLTIELSRHVYSEEYIALTKEFYLNM.

Belongs to the methyltransferase superfamily. tRNA (adenine-N(6)-)-methyltransferase family.

Its subcellular location is the cytoplasm. It carries out the reaction adenosine(37) in tRNA1(Val) + S-adenosyl-L-methionine = N(6)-methyladenosine(37) in tRNA1(Val) + S-adenosyl-L-homocysteine + H(+). Its function is as follows. Specifically methylates the adenine in position 37 of tRNA(1)(Val) (anticodon cmo5UAC). The chain is tRNA1(Val) (adenine(37)-N6)-methyltransferase from Phocaeicola vulgatus (strain ATCC 8482 / DSM 1447 / JCM 5826 / CCUG 4940 / NBRC 14291 / NCTC 11154) (Bacteroides vulgatus).